Reading from the N-terminus, the 130-residue chain is Small ribosomal subunit protein bS18 (130 aa).

Basic and acidic residues-rich tracts occupy residues 98–108 and 117–130; these read KKMEESVKSAE and EESK…AKTE. The tract at residues 98 to 130 is disordered; that stretch reads KKMEESVKSAEPKATAEATEESKPKRTRKAKTE.

Belongs to the bacterial ribosomal protein bS18 family. As to quaternary structure, part of the 30S ribosomal subunit. Forms a tight heterodimer with protein bS6.

Binds as a heterodimer with protein bS6 to the central domain of the 16S rRNA, where it helps stabilize the platform of the 30S subunit. In Metamycoplasma arthritidis (strain 158L3-1) (Mycoplasma arthritidis), this protein is Small ribosomal subunit protein bS18.